Here is a 900-residue protein sequence, read N- to C-terminus: Aldos-2-ulose dehydratase (900 aa).

Residues 1 to 433 are dehydratase domain; it reads MYSKVFLKPH…NPSINVFLST (433 aa). Y35 lines the ascopyrone M pocket. Mg(2+) contacts are provided by D101, T103, N105, F107, and D109. Ascopyrone M contacts are provided by Y116, M120, H155, H215, H295, and H337. H155 serves as the catalytic Proton acceptor. Zn(2+) is bound by residues H215, H295, H337, D343, D345, D347, E349, and E351. Ascopyrone M is bound by residues Y414, Y419, and A627. Positions 434–739 are isomerase domain; sequence GILAERLDEE…EFPGFETFST (306 aa). 2 residues coordinate 1,5-anhydro-D-fructose: A627 and H630. The Zn(2+) site is built by H630, H632, and E639. Ascopyrone M is bound by residues E639 and H641. H641 provides a ligand contact to 1,5-anhydro-D-fructose. H709 contributes to the Zn(2+) binding site. Residue W726 participates in ascopyrone M binding. Position 726 (W726) interacts with 1,5-anhydro-D-fructose.

Homodimer. Requires Zn(2+) as cofactor.

It catalyses the reaction 1,5-anhydro-D-fructose = microthecin + H2O. The enzyme catalyses 1,5-anhydro-D-fructose = ascopyrone M + H2O. It carries out the reaction ascopyrone M = microthecin. The catalysed reaction is 2-dehydro-D-glucose = cortalcerone + H2O. Its pathway is carbohydrate metabolism; 1,5-anhydro-D-fructose degradation. Functionally, a bifunctional enzyme which catalyzes the dehydration of anhydrofructose into ascopyrone M, and the isomerization of ascopyrone M into microthecin. To a lesser extent, can also act on 2-dehydro-D-glucopyranose (D-glucosone), leading to the antibiotic cortalcerone. The chain is Aldos-2-ulose dehydratase from Phanerodontia chrysosporium (White-rot fungus).